Here is a 290-residue protein sequence, read N- to C-terminus: 33 kDa chaperonin (290 aa).

2 disulfides stabilise this stretch: Cys-235–Cys-237 and Cys-268–Cys-271.

This sequence belongs to the HSP33 family. Post-translationally, under oxidizing conditions two disulfide bonds are formed involving the reactive cysteines. Under reducing conditions zinc is bound to the reactive cysteines and the protein is inactive.

It localises to the cytoplasm. Redox regulated molecular chaperone. Protects both thermally unfolding and oxidatively damaged proteins from irreversible aggregation. Plays an important role in the bacterial defense system toward oxidative stress. The protein is 33 kDa chaperonin of Streptococcus pyogenes serotype M49.